We begin with the raw amino-acid sequence, 275 residues long: uncharacterized protein (275 aa).

The span at 148–158 (TFPTTAPSITP) shows a compositional bias: polar residues. A disordered region spans residues 148-173 (TFPTTAPSITPGNKEGEKTTSTDTDE). The chain crosses the membrane as a helical span at residues 187-207 (ILIAVTLLLSGVAIIVFVIFE). Residues 234-264 (GQPPGTAESKPDSQPQKVGQDAANSSNPKKA) form a disordered region. Positions 245-261 (DSQPQKVGQDAANSSNP) are enriched in polar residues.

It localises to the membrane. This is an uncharacterized protein from Homo sapiens (Human).